A 112-amino-acid chain; its full sequence is Putative transmembrane protein ORF112 (112 aa).

3 helical membrane-spanning segments follow: residues 26-46, 50-70, and 80-100; these read FWEV…GILV, ILVT…MYLF, and IFFP…LVGV.

Its subcellular location is the host membrane. The sequence is that of Putative transmembrane protein ORF112 from Acidianus convivator (ABV).